A 342-amino-acid chain; its full sequence is tRNA N6-adenosine threonylcarbamoyltransferase (342 aa).

Fe cation-binding residues include histidine 119 and histidine 123. Substrate is bound by residues 142 to 146 (VVSGG), aspartate 175, glycine 188, and asparagine 282. Aspartate 310 lines the Fe cation pocket.

It belongs to the KAE1 / TsaD family. Fe(2+) is required as a cofactor.

It is found in the cytoplasm. The catalysed reaction is L-threonylcarbamoyladenylate + adenosine(37) in tRNA = N(6)-L-threonylcarbamoyladenosine(37) in tRNA + AMP + H(+). In terms of biological role, required for the formation of a threonylcarbamoyl group on adenosine at position 37 (t(6)A37) in tRNAs that read codons beginning with adenine. Is involved in the transfer of the threonylcarbamoyl moiety of threonylcarbamoyl-AMP (TC-AMP) to the N6 group of A37, together with TsaE and TsaB. TsaD likely plays a direct catalytic role in this reaction. The chain is tRNA N6-adenosine threonylcarbamoyltransferase from Moorella thermoacetica (strain ATCC 39073 / JCM 9320).